We begin with the raw amino-acid sequence, 468 residues long: Purple acid phosphatase 10 (468 aa).

The signal sequence occupies residues Met1 to Cys25. Asn95 and Asn113 each carry an N-linked (GlcNAc...) asparagine glycan. Asp167 provides a ligand contact to Fe cation. Asn175 carries N-linked (GlcNAc...) asparagine glycosylation. The Fe cation site is built by Asp196 and Tyr199. Asp196 serves as a coordination point for Zn(2+). Asn233 is a Zn(2+) binding site. Asn233 is a binding site for substrate. A glycan (N-linked (GlcNAc...) asparagine) is linked at Asn306. His318 is a binding site for Zn(2+). His328 (proton donor) is an active-site residue. Position 355 (His355) interacts with Zn(2+). Substrate is bound at residue His355–His357. His357 provides a ligand contact to Fe cation. Asn428 is a glycosylation site (N-linked (GlcNAc...) asparagine).

Belongs to the metallophosphoesterase superfamily. Purple acid phosphatase family. As to quaternary structure, homodimer; disulfide-linked. Requires Fe cation as cofactor. Zn(2+) serves as cofactor. In terms of tissue distribution, expressed in roots, stems, leaves, flowers and siliques.

It is found in the secreted. Its subcellular location is the cytoplasm. It carries out the reaction a phosphate monoester + H2O = an alcohol + phosphate. The sequence is that of Purple acid phosphatase 10 (PAP10) from Arabidopsis thaliana (Mouse-ear cress).